The following is a 53-amino-acid chain: uncharacterized protein (53 aa).

Transmembrane regions (helical) follow at residues leucine 3–leucine 22 and alanine 26–leucine 45.

It is found in the cell membrane. This is an uncharacterized protein from Bacillus subtilis (strain 168).